The sequence spans 318 residues: UDP-N-acetylenolpyruvoylglucosamine reductase (318 aa).

One can recognise an FAD-binding PCMH-type domain in the interval 38 to 204; sequence IGGVCPVIVE…LGIEILLKEG (167 aa). Residue R182 is part of the active site. Residues 212-229 show a composition bias toward basic and acidic residues; sequence SLKDKRDRRNSSQPENKK. The disordered stretch occupies residues 212 to 232; the sequence is SLKDKRDRRNSSQPENKKSAG. S233 functions as the Proton donor in the catalytic mechanism. The active site involves E310.

Belongs to the MurB family. The cofactor is FAD.

It is found in the cytoplasm. The catalysed reaction is UDP-N-acetyl-alpha-D-muramate + NADP(+) = UDP-N-acetyl-3-O-(1-carboxyvinyl)-alpha-D-glucosamine + NADPH + H(+). Its pathway is cell wall biogenesis; peptidoglycan biosynthesis. Functionally, cell wall formation. This chain is UDP-N-acetylenolpyruvoylglucosamine reductase, found in Leptospira interrogans serogroup Icterohaemorrhagiae serovar Lai (strain 56601).